A 360-amino-acid polypeptide reads, in one-letter code: Peptide chain release factor 1 (360 aa).

Position 237 is an N5-methylglutamine (Gln237).

Belongs to the prokaryotic/mitochondrial release factor family. In terms of processing, methylated by PrmC. Methylation increases the termination efficiency of RF1.

Its subcellular location is the cytoplasm. Its function is as follows. Peptide chain release factor 1 directs the termination of translation in response to the peptide chain termination codons UAG and UAA. The protein is Peptide chain release factor 1 of Pseudomonas syringae pv. tomato (strain ATCC BAA-871 / DC3000).